We begin with the raw amino-acid sequence, 416 residues long: Glutamyl-tRNA reductase (416 aa).

Substrate is bound by residues T50 to R53, S109, E114 to Q116, and Q120. C51 functions as the Nucleophile in the catalytic mechanism. An NADP(+)-binding site is contributed by G189 to I194.

Belongs to the glutamyl-tRNA reductase family. In terms of assembly, homodimer.

The enzyme catalyses (S)-4-amino-5-oxopentanoate + tRNA(Glu) + NADP(+) = L-glutamyl-tRNA(Glu) + NADPH + H(+). Its pathway is porphyrin-containing compound metabolism; protoporphyrin-IX biosynthesis; 5-aminolevulinate from L-glutamyl-tRNA(Glu): step 1/2. Functionally, catalyzes the NADPH-dependent reduction of glutamyl-tRNA(Glu) to glutamate 1-semialdehyde (GSA). The polypeptide is Glutamyl-tRNA reductase (Vesicomyosocius okutanii subsp. Calyptogena okutanii (strain HA)).